A 393-amino-acid polypeptide reads, in one-letter code: Bifunctional enzyme Fae/Hps (393 aa).

Positions 1-161 are formaldehyde-activating enzyme; that stretch reads MYLIGEALVG…HEKDRAAHAV (161 aa). The active-site Proton donor is the histidine 17. Aspartate 19, leucine 48, lysine 66, threonine 68, and glutamine 83 together coordinate substrate. The 3-hexulose-6-phosphate synthase stretch occupies residues 162-393; that stretch reads MGFKVQRLWD…IDQFRIMTDF (232 aa).

It in the N-terminal section; belongs to the formaldehyde-activating enzyme family. The protein in the C-terminal section; belongs to the HPS/KGPDC family. HPS subfamily.

It carries out the reaction 5,6,7,8-tetrahydromethanopterin + formaldehyde = 5,10-methylenetetrahydromethanopterin + H2O. It catalyses the reaction D-ribulose 5-phosphate + formaldehyde = D-arabino-hex-3-ulose 6-phosphate. Its pathway is carbohydrate biosynthesis; D-ribose 5-phosphate biosynthesis. Catalyzes the condensation of formaldehyde with tetrahydromethanopterin (H(4)MPT) to 5,10-methylenetetrahydromethanopterin. In terms of biological role, catalyzes the reversible formation of ribulose-5-phosphate and formaldehyde from 3-hexulose-6-phosphate. The polypeptide is Bifunctional enzyme Fae/Hps (Methanoculleus marisnigri (strain ATCC 35101 / DSM 1498 / JR1)).